The chain runs to 61 residues: uncharacterized protein (61 aa).

The N-terminal stretch at 1–28 (MHRRARRMPMRPRRSKRVRNRYTMGTFA) is a signal peptide.

This is an uncharacterized protein from Mycobacterium tuberculosis (strain ATCC 25618 / H37Rv).